The following is a 606-amino-acid chain: MAIINLPVPTNSSSEVNKHNHLRSCLPSGRATFTTLSAAAMRSATMAAANVREQSGQKQQLINRRSGNYEAPLWEFDYIQSLKNEYAGDIYVSRANELKEQVKMMLDEEDMKLLDCMELVDGLERLGLAYHFEGRINRLLSSDYKAIHEGNHQRNKEDLYAAALEFRIFRQNGFNVPQDIFNDFITEDGEFDESLSEDTMGLLSLYEASFLSLEGEATLDLAREFTTKHLNNYLGKENTDQNLRILVYHALELPLRWRAPRIEARWYIDAYERSPNVNPTLLELAKIDFNIVQAIHQQDLKHVSWWWKNIRIAEKLTFIRDRIVENFFWAIGAVFEPQYGSCRRMLTKVFALITMIDDIYDVYGTLEELELFTDAVDRWDVKAIDQLPDYMRVGYLGFFNSINEMAYDALKEQGVHIVEYLRKVWADLCKAYLQEAKWYYAGYTPTVEEYLENAWVSMSVPVMLMHAYAGVTNPMNKEAMDVLDTHDIVRCSSYLLRFADDLGTSPGEMKRGDVPKLVQCYMKEAGCSEEESREHVWFLLRETWKKMNKDSEWAESPFSKTFVTAAKNFGRVALVMYQYGDGHGLHSNPEAKDRILASLFSPVPPA.

The transit peptide at 1-38 (MAIINLPVPTNSSSEVNKHNHLRSCLPSGRATFTTLSA) directs the protein to the chloroplast. Arginine 320, aspartate 357, aspartate 361, arginine 497, and aspartate 500 together coordinate (2E)-geranyl diphosphate. Positions 357 and 361 each coordinate Mg(2+). Positions 357-361 (DDIYD) match the DDXXD motif motif. Residues aspartate 500, threonine 504, and glutamate 508 each coordinate Mg(2+).

It belongs to the terpene synthase family. Tpsb subfamily. In terms of assembly, monomer. Requires Mg(2+) as cofactor. Mn(2+) serves as cofactor. Confined to fruits.

Its subcellular location is the plastid. It is found in the chloroplast. It catalyses the reaction (2E,6E)-farnesyl diphosphate = (E)-beta-farnesene + diphosphate. The catalysed reaction is (2E)-geranyl diphosphate = limonene + diphosphate. The enzyme catalyses (2E)-geranyl diphosphate = beta-pinene + diphosphate. It carries out the reaction (2E)-geranyl diphosphate = sabinene + diphosphate. It catalyses the reaction (2E)-geranyl diphosphate = beta-myrcene + diphosphate. The catalysed reaction is (2E)-geranyl diphosphate = alpha-pinene + diphosphate. The enzyme catalyses (2E)-geranyl diphosphate = terpinolene + diphosphate. It functions in the pathway secondary metabolite biosynthesis; terpenoid biosynthesis. Its function is as follows. Monoterpene synthase (mono-TPS) involved in the biosynthesis of monoterpenes natural products, constituent of coffee beverage aroma. Catalyzes the conversion of (2E)-geranyl diphosphate (GPP) into limonene, beta-pinene, sabinene and beta-myrcene, and, as minor products, alpha-pinene and alpha-terpinolene. Can also, with a low efficiency, use farnesyl pyrophosphate (FPP) as substrate to produce beta-farnesene. Not able to use geranylgeranyl pyrophosphate (GGPP) as substrate. The polypeptide is Limonene synthase, chloroplastic (Coffea arabica (Arabian coffee)).